A 1243-amino-acid polypeptide reads, in one-letter code: Plasma membrane calcium-transporting ATPase 2 (1243 aa).

Residues 1–13 (MGDMTNSDFYSKN) are compositionally biased toward polar residues. A disordered region spans residues 1–24 (MGDMTNSDFYSKNQRNESSHGGEF). Residues 1–94 (MGDMTNSDFY…NFIPPKKPKT (94 aa)) are Cytoplasmic-facing. Serine 18 is subject to Phosphoserine. Residues 95 to 115 (FLQLVWEALQDVTLIILEIAA) form a helical membrane-spanning segment. Topologically, residues 116–152 (IISLGLSFYHPPGEGNEGCATAQGGAEDEGEAEAGWI) are extracellular. The helical transmembrane segment at 153-173 (EGAAILLSVICVVLVTAFNDW) threads the bilayer. At 174 to 390 (SKEKQFRGLQ…KEKSVLQGKL (217 aa)) the chain is on the cytoplasmic side. The tract at residues 334–381 (GKMQDGNVDASQSKAKQQDGAAAMEMQPLKSAEGGDADDRKKASMHKK) is disordered. Residues 391 to 410 (TKLAVQIGKAGLVMSAITVI) form a helical membrane-spanning segment. Topologically, residues 411–443 (ILVLYFTVDTFVVNKKPWLPECTPVYVQYFVKF) are extracellular. A helical membrane pass occupies residues 444–461 (FIIGVTVLVVAVPEGLPL). At 462 to 875 (AVTISLAYSV…MWGRNVYDSI (414 aa)) the chain is on the cytoplasmic side. The active-site 4-aspartylphosphate intermediate is aspartate 499. Mg(2+)-binding residues include aspartate 820 and aspartate 824. A helical transmembrane segment spans residues 876 to 895 (SKFLQFQLTVNVVAVIVAFT). The Extracellular portion of the chain corresponds to 896–905 (GACITQDSPL). A helical transmembrane segment spans residues 906 to 926 (KAVQMLWVNLIMDTFASLALA). Over 927–946 (TEPPTETLLLRKPYGRNKPL) the chain is Cytoplasmic. The helical transmembrane segment at 947-969 (ISRTMMKNILGHAVYQLALIFTL) threads the bilayer. Over 970-987 (LFVGEKMFQIDSGRNAPL) the chain is Extracellular. The helical transmembrane segment at 988–1009 (HSPPSEHYTIIFNTFVMMQLFN) threads the bilayer. At 1010–1028 (EINARKIHGERNVFDGIFR) the chain is on the cytoplasmic side. A helical membrane pass occupies residues 1029–1050 (NPIFCTIVLGTFAIQIVIVQFG). At 1051–1060 (GKPFSCSPLQ) the chain is on the extracellular side. The chain crosses the membrane as a helical span at residues 1061-1082 (LDQWMWCIFIGLGELVWGQVIA). Residues 1083–1243 (TIPTSRLKFL…SPIHSLETSL (161 aa)) are Cytoplasmic-facing. Residues glutamate 1120, arginine 1132, and leucine 1134 each carry the phosphoserine modification. A calmodulin-binding subdomain A region spans residues 1123–1140 (LRRGQILWFRGLNRIQTQ). The residue at position 1139 (threonine 1139) is a Phosphothreonine; by PKC. The interval 1141–1150 (IRVVKAFRSS) is calmodulin-binding subdomain B. 6 positions are modified to phosphoserine: alanine 1146, leucine 1151, serine 1163, histidine 1165, aspartate 1177, and serine 1178. Phosphothreonine is present on threonine 1188. The segment at 1194–1243 (AALKQNSSPPSSLNKNNSAIDSGINLTTDTSKSATSSSPGSPIHSLETSL) is disordered. Composition is skewed to low complexity over residues 1196 to 1211 (LKQN…KNNS) and 1220 to 1234 (TTDT…SPGS). Position 1201 is a phosphoserine; by PKA (serine 1201). The residue at position 1211 (serine 1211) is a Phosphoserine.

It belongs to the cation transport ATPase (P-type) (TC 3.A.3) family. Type IIB subfamily. As to quaternary structure, interacts with PDZD11. As to expression, mainly expressed in brain cortex. Found in low levels in skeletal muscle, heart muscle, stomach, liver, kidney and lung. Isoforms containing segment B are found in brain cortex and at low levels in other tissues. Isoforms containing segments X and W are found at low levels in all tissues. Isoforms containing segment A and segment Z are found at low levels in skeletal muscle and heart muscle.

It is found in the cell membrane. The protein localises to the synapse. Its subcellular location is the apical cell membrane. It localises to the basolateral cell membrane. The catalysed reaction is Ca(2+)(in) + ATP + H2O = Ca(2+)(out) + ADP + phosphate + H(+). Its activity is regulated as follows. Up-regulated by calmodulin which increases the affinity of the pump for Ca(2+) ions. ATP-driven Ca(2+) ion pump involved in the maintenance of basal intracellular Ca(2+) levels in specialized cells of cerebellar circuit and vestibular and cochlear systems. Uses ATP as an energy source to transport cytosolic Ca(2+) ions across the plasma membrane to the extracellular compartment. Has fast activation and Ca(2+) clearance rate suited to control fast neuronal Ca(2+) dynamics. At parallel fiber to Purkinje neuron synapse, mediates presynaptic Ca(2+) efflux in response to climbing fiber-induced Ca(2+) rise. Provides for fast return of Ca(2+) concentrations back to their resting levels, ultimately contributing to long-term depression induction and motor learning. Plays an essential role in hearing and balance. In cochlear hair cells, shuttles Ca(2+) ions from stereocilia to the endolymph and dissipates Ca(2+) transients generated by the opening of the mechanoelectrical transduction channels. Regulates Ca(2+) levels in the vestibular system, where it contributes to the formation of otoconia. In non-excitable cells, regulates Ca(2+) signaling through spatial control of Ca(2+) ions extrusion and dissipation of Ca(2+) transients generated by store-operated channels. In lactating mammary gland, allows for the high content of Ca(2+) ions in the milk. The protein is Plasma membrane calcium-transporting ATPase 2 of Homo sapiens (Human).